Here is a 159-residue protein sequence, read N- to C-terminus: Ribosomal RNA large subunit methyltransferase H (159 aa).

Leucine 76 and glycine 108 together coordinate S-adenosyl-L-methionine.

Belongs to the RNA methyltransferase RlmH family. As to quaternary structure, homodimer.

It is found in the cytoplasm. The catalysed reaction is pseudouridine(1915) in 23S rRNA + S-adenosyl-L-methionine = N(3)-methylpseudouridine(1915) in 23S rRNA + S-adenosyl-L-homocysteine + H(+). Specifically methylates the pseudouridine at position 1915 (m3Psi1915) in 23S rRNA. The protein is Ribosomal RNA large subunit methyltransferase H of Lactiplantibacillus plantarum (strain ATCC BAA-793 / NCIMB 8826 / WCFS1) (Lactobacillus plantarum).